Consider the following 605-residue polypeptide: Arginine--tRNA ligase (605 aa).

Residues 131 to 141 (ANPTGPMHVGH) carry the 'HIGH' region motif. The disordered stretch occupies residues 290-309 (PPPKSKKGQPAPAQAASNSA). Over residues 298-309 (QPAPAQAASNSA) the composition is skewed to low complexity.

This sequence belongs to the class-I aminoacyl-tRNA synthetase family. As to quaternary structure, monomer.

Its subcellular location is the cytoplasm. The enzyme catalyses tRNA(Arg) + L-arginine + ATP = L-arginyl-tRNA(Arg) + AMP + diphosphate. This chain is Arginine--tRNA ligase, found in Anaeromyxobacter sp. (strain Fw109-5).